We begin with the raw amino-acid sequence, 155 residues long: SsrA-binding protein (155 aa).

This sequence belongs to the SmpB family.

The protein resides in the cytoplasm. Functionally, required for rescue of stalled ribosomes mediated by trans-translation. Binds to transfer-messenger RNA (tmRNA), required for stable association of tmRNA with ribosomes. tmRNA and SmpB together mimic tRNA shape, replacing the anticodon stem-loop with SmpB. tmRNA is encoded by the ssrA gene; the 2 termini fold to resemble tRNA(Ala) and it encodes a 'tag peptide', a short internal open reading frame. During trans-translation Ala-aminoacylated tmRNA acts like a tRNA, entering the A-site of stalled ribosomes, displacing the stalled mRNA. The ribosome then switches to translate the ORF on the tmRNA; the nascent peptide is terminated with the 'tag peptide' encoded by the tmRNA and targeted for degradation. The ribosome is freed to recommence translation, which seems to be the essential function of trans-translation. The protein is SsrA-binding protein of Streptococcus pyogenes serotype M5 (strain Manfredo).